Consider the following 349-residue polypeptide: Flap endonuclease 1 (349 aa).

The segment at 1 to 98 is N-domain; it reads MDLGEIVEDV…EEIERRKRAK (98 aa). Mg(2+)-binding residues include D27, D80, E152, E154, D173, D175, and D236. The interval 116–258 is I-domain; the sequence is EIRKYAQAAV…TALRIIKKYN (143 aa). The interval 341-349 is interaction with PCNA; that stretch reads KQTGLDQWF.

Belongs to the XPG/RAD2 endonuclease family. FEN1 subfamily. As to quaternary structure, interacts with PCNA. PCNA stimulates the nuclease activity without altering cleavage specificity. Requires Mg(2+) as cofactor.

Functionally, structure-specific nuclease with 5'-flap endonuclease and 5'-3' exonuclease activities involved in DNA replication and repair. During DNA replication, cleaves the 5'-overhanging flap structure that is generated by displacement synthesis when DNA polymerase encounters the 5'-end of a downstream Okazaki fragment. Binds the unpaired 3'-DNA end and kinks the DNA to facilitate 5' cleavage specificity. Cleaves one nucleotide into the double-stranded DNA from the junction in flap DNA, leaving a nick for ligation. Also involved in the base excision repair (BER) pathway. Acts as a genome stabilization factor that prevents flaps from equilibrating into structures that lead to duplications and deletions. Also possesses 5'-3' exonuclease activity on nicked or gapped double-stranded DNA. This chain is Flap endonuclease 1, found in Sulfolobus acidocaldarius (strain ATCC 33909 / DSM 639 / JCM 8929 / NBRC 15157 / NCIMB 11770).